Reading from the N-terminus, the 630-residue chain is Putative adenylate cyclase regulatory protein (630 aa).

Residues 10–46 (CAVCREPWAEGALELFPCRHVFCTVCVVERWRCPSCQ) form an RING-type zinc finger. LRR repeat units follow at residues 184–206 (FLVH…CRLK), 207–230 (TLEA…CALP), 231–251 (QLTS…RCIH), 255–277 (KLKV…GGMR), 278–301 (SLEK…CKFS), 302–324 (NLRE…KNLI), 325–347 (NLKV…ERLV), 348–370 (NLDK…ANLS), 371–393 (NLKE…QDLN), 394–416 (NLEV…KNLS), 417–439 (KMRE…ETLK), 440–462 (GLEE…WSLH), 463–485 (HLRV…EGIT), 486–508 (GLEE…WNLR), 509–531 (NVCV…QCLT), 532–554 (GLEE…GNLR), 555–577 (NLKC…DRLV), and 578–599 (NLEK…MELM).

May interact with adenylate cyclase to regulate its activity. Its function is as follows. May be involved in the postranscriptional regulation of genes in VSG expression sites. This is Putative adenylate cyclase regulatory protein (ESAG8C) from Trypanosoma equiperdum.